The following is a 46-amino-acid chain: Bacteriocin acidocin 8912 (46 aa).

A propeptide spanning residues 1-20 is cleaved from the precursor; it reads MISSHQKTLTDKELALISGG.

The protein localises to the secreted. Functionally, has a bactericidal effect on sensitive cells but not a bacteriolytic effect. The polypeptide is Bacteriocin acidocin 8912 (acdT) (Lactobacillus acidophilus).